Reading from the N-terminus, the 340-residue chain is Cobalt-precorrin-5B C(1)-methyltransferase (340 aa).

Belongs to the CbiD family.

The catalysed reaction is Co-precorrin-5B + S-adenosyl-L-methionine = Co-precorrin-6A + S-adenosyl-L-homocysteine. The protein operates within cofactor biosynthesis; adenosylcobalamin biosynthesis; cob(II)yrinate a,c-diamide from sirohydrochlorin (anaerobic route): step 6/10. Catalyzes the methylation of C-1 in cobalt-precorrin-5B to form cobalt-precorrin-6A. The chain is Cobalt-precorrin-5B C(1)-methyltransferase from Methanococcoides burtonii (strain DSM 6242 / NBRC 107633 / OCM 468 / ACE-M).